The following is a 184-amino-acid chain: UPF0398 protein BCAH820_1652 (184 aa).

This sequence belongs to the UPF0398 family.

This Bacillus cereus (strain AH820) protein is UPF0398 protein BCAH820_1652.